Here is a 606-residue protein sequence, read N- to C-terminus: Sulfite reductase [NADPH] flavoprotein alpha-component (606 aa).

In terms of domain architecture, Flavodoxin-like spans 64-202 (VTLISASQTG…QAQQWRQQVV (139 aa)). FMN is bound by residues 70 to 75 (SQTGNA), 117 to 120 (STQG), and 153 to 162 (LGDTSYEHFC). Residues 212–234 (QSTAPTQSTTPAAAAITSGGTTT) show a composition bias toward low complexity. The tract at residues 212 to 235 (QSTAPTQSTTPAAAAITSGGTTTV) is disordered. In terms of domain architecture, FAD-binding FR-type spans 241-455 (TAPLTAQLSV…IEHNDNFRLP (215 aa)). FAD-binding positions include T329, K363, 393–396 (RLYS), 411–413 (TVG), Y417, and 426–429 (GGAS). NADP(+) is bound by residues 526 to 527 (SR), 532 to 536 (KIYVQ), and D568. Position 606 (Y606) interacts with FAD.

The protein belongs to the NADPH-dependent sulphite reductase flavoprotein subunit CysJ family. It in the N-terminal section; belongs to the flavodoxin family. In the C-terminal section; belongs to the flavoprotein pyridine nucleotide cytochrome reductase family. In terms of assembly, alpha(8)-beta(8). The alpha component is a flavoprotein, the beta component is a hemoprotein. The cofactor is FAD. Requires FMN as cofactor.

The catalysed reaction is hydrogen sulfide + 3 NADP(+) + 3 H2O = sulfite + 3 NADPH + 4 H(+). Its pathway is sulfur metabolism; hydrogen sulfide biosynthesis; hydrogen sulfide from sulfite (NADPH route): step 1/1. In terms of biological role, component of the sulfite reductase complex that catalyzes the 6-electron reduction of sulfite to sulfide. This is one of several activities required for the biosynthesis of L-cysteine from sulfate. The flavoprotein component catalyzes the electron flow from NADPH -&gt; FAD -&gt; FMN to the hemoprotein component. The polypeptide is Sulfite reductase [NADPH] flavoprotein alpha-component (Yersinia pestis bv. Antiqua (strain Antiqua)).